Reading from the N-terminus, the 124-residue chain is Probable glycine cleavage system H protein (124 aa).

Residues 25–106 (TATIGITDYA…PYGSWLVKMA (82 aa)) form the Lipoyl-binding domain. An N6-lipoyllysine modification is found at lysine 66.

It belongs to the GcvH family. The glycine cleavage system is composed of four proteins: P, T, L and H. Requires (R)-lipoate as cofactor.

In terms of biological role, the glycine cleavage system catalyzes the degradation of glycine. The H protein shuttles the methylamine group of glycine from the P protein to the T protein. The chain is Probable glycine cleavage system H protein from Thermoplasma acidophilum (strain ATCC 25905 / DSM 1728 / JCM 9062 / NBRC 15155 / AMRC-C165).